A 98-amino-acid polypeptide reads, in one-letter code: Co-chaperonin GroES 4 (98 aa).

The protein belongs to the GroES chaperonin family. In terms of assembly, heptamer of 7 subunits arranged in a ring. Interacts with the chaperonin GroEL.

The protein localises to the cytoplasm. In terms of biological role, together with the chaperonin GroEL, plays an essential role in assisting protein folding. The GroEL-GroES system forms a nano-cage that allows encapsulation of the non-native substrate proteins and provides a physical environment optimized to promote and accelerate protein folding. GroES binds to the apical surface of the GroEL ring, thereby capping the opening of the GroEL channel. This is Co-chaperonin GroES 4 from Mesorhizobium japonicum (strain LMG 29417 / CECT 9101 / MAFF 303099) (Mesorhizobium loti (strain MAFF 303099)).